We begin with the raw amino-acid sequence, 1858 residues long: Protein ROS1C (1858 aa).

Residues 347–356 show a composition bias toward basic and acidic residues; the sequence is TEALKGEDAP. Disordered regions lie at residues 347–416 and 1288–1309; these read TEAL…AEPF and PDTAAQASKPKKSRTTSKKNSE. Composition is skewed to basic residues over residues 360-370 and 394-404; these read LKTRRRKHRPK and KPKRKYVRKNR. Residues Cys1492, Cys1499, Cys1502, and Cys1508 each coordinate [4Fe-4S] cluster.

The protein belongs to the DNA glycosylase family. DEMETER subfamily. It depends on [4Fe-4S] cluster as a cofactor. As to expression, expressed in pistils and immature seeds. Expressed a low levels in roots, leaves and anthers.

It localises to the nucleus. Functionally, bifunctional DNA glycosylase/lyase, which excises 5-methylcytosine (5-meC) and 5-hydroxymethylcytosine (5-hmeC), leaving an apyrimidinic (AP) site that is subsequently incised by the lyase activity. Is responsible for the demethylation of methylated cytosine residues of Tos17 retrotransposon DNA. Demethylation of Tos17 cytosine residues promotes its transposition. May be involved in seed development. The polypeptide is Protein ROS1C (Oryza sativa subsp. japonica (Rice)).